We begin with the raw amino-acid sequence, 104 residues long: Naphthalene 1,2-dioxygenase system, ferredoxin component (104 aa).

A Rieske domain is found at 6–101 (IDAVALYEIP…VKIEGQRVMI (96 aa)). Positions 45, 47, 64, and 67 each coordinate [2Fe-2S] cluster.

The protein belongs to the bacterial ring-hydroxylating dioxygenase ferredoxin component family. As to quaternary structure, the naphthalene dioxygenase (NDO) multicomponent enzyme system is composed of an electron transfer component and a dioxygenase component (iron sulfur protein (ISP)). The electron transfer component is composed of a ferredoxin reductase (NdoR) and a ferredoxin (NdoA), and the dioxygenase component is formed of a heterohexamer (trimer of heterodimers) of three large alpha subunits (NdoB) and three small beta subunits (NdoC). It depends on [2Fe-2S] cluster as a cofactor.

It functions in the pathway aromatic compound metabolism; naphthalene degradation. Its function is as follows. Component of the naphthalene dioxygenase (NDO) multicomponent enzyme system which catalyzes the incorporation of both atoms of molecular oxygen into naphthalene to form cis-(1R,2S)-dihydroxy-1,2-dihydronaphthalene. Functions as an intermediate electron transfer protein via a specific interaction with iron sulfur protein components (ISP) (NdoB and NdoC). This chain is Naphthalene 1,2-dioxygenase system, ferredoxin component, found in Pseudomonas aeruginosa.